A 293-amino-acid polypeptide reads, in one-letter code: N-acetylneuraminate lyase (293 aa).

Aceneuramate contacts are provided by Ser47, Thr48, and Tyr136. Tyr136 acts as the Proton donor in catalysis. Lys164 functions as the Schiff-base intermediate with substrate in the catalytic mechanism. Aceneuramate-binding residues include Thr166, Gly188, Asp190, Glu191, Ser207, and Tyr251.

This sequence belongs to the DapA family. NanA subfamily. In terms of assembly, homotetramer.

Its subcellular location is the cytoplasm. The enzyme catalyses aceneuramate = aldehydo-N-acetyl-D-mannosamine + pyruvate. The protein operates within amino-sugar metabolism; N-acetylneuraminate degradation; D-fructose 6-phosphate from N-acetylneuraminate: step 1/5. In terms of biological role, catalyzes the reversible aldol cleavage of N-acetylneuraminic acid (sialic acid; Neu5Ac) to form pyruvate and N-acetylmannosamine (ManNAc) via a Schiff base intermediate. In Pasteurella multocida (strain Pm70), this protein is N-acetylneuraminate lyase.